A 1056-amino-acid chain; its full sequence is Potassium transporter TRK1 (1056 aa).

The Cytoplasmic portion of the chain corresponds to Met1–Asn46. The chain crosses the membrane as a helical span at residues Phe47–Tyr67. At Pro68–Ala73 the chain is on the extracellular side. Residues Tyr74–Leu90 lie within the membrane without spanning it. The Extracellular segment spans residues Asn91 to Ser99. The chain crosses the membrane as a helical span at residues Leu100–Leu122. The Cytoplasmic segment spans residues Leu123–Lys622. 3 disordered regions span residues Arg180–Glu276, Lys290–Asp350, and Pro404–Asn571. The span at Ser186–Thr203 shows a compositional bias: low complexity. Basic and acidic residues predominate over residues Glu236 to Arg245. Positions Pro335–Asn344 are enriched in polar residues. A compositionally biased stretch (low complexity) spans Thr412–Ser423. 2 stretches are compositionally biased toward acidic residues: residues Asp428–Ser449 and Tyr469–Glu487. Over residues Arg521–Ser533 the composition is skewed to polar residues. A compositionally biased stretch (basic residues) spans Lys537–Arg549. Residues Asn553 to Ser563 show a composition bias toward polar residues. Residues Leu623–Trp646 traverse the membrane as a helical segment. Residues Ile647 to Ala665 are Extracellular-facing. Residues Trp666–Thr682 lie within the membrane without spanning it. Residues Leu683 to Gln693 lie on the Extracellular side of the membrane. The helical transmembrane segment at Asn694–Thr710 threads the bilayer. Over Gly711–Ser754 the chain is Cytoplasmic. A helical transmembrane segment spans residues Val755–Leu778. Residues Asp779 to Arg793 are Extracellular-facing. Residues Val794–Ser810 lie within the membrane without spanning it. Over Val811–Leu817 the chain is Extracellular. A helical membrane pass occupies residues His818–Arg841. Topologically, residues Arg842 to His874 are cytoplasmic. The chain crosses the membrane as a helical span at residues Leu875–Ala896. Over Glu897–Ser909 the chain is Extracellular. Residues Ile910–Met928 lie within the membrane without spanning it. The Extracellular portion of the chain corresponds to Gly929–Asn942. The chain crosses the membrane as a helical span at residues Val943–Ile965. Residues Asp966–Val1056 lie on the Cytoplasmic side of the membrane.

Belongs to the TrkH potassium transport family.

It localises to the cell membrane. The enzyme catalyses K(+)(in) = K(+)(out). It carries out the reaction chloride(in) = chloride(out). With respect to regulation, TRK1-mediated chloride conductance is blocked by 4,4'-diisothiocyanatostilbene-2,2'-disulfonic acid. Functionally, potassium transporter that mediates K(+) influx, as well as Cl(-) efflux as a secondary function. TRK1 is the major K(+) uptake transporter that regulates membrane potential and intracellular pH. The TRK1-mediated Cl(-) efflux should serve as a Cl(-) detoxification route and may play a role in sustaining C.albicans on mammalian epithelial surfaces, or in physiological saline solutions such as saliva. Mediates candidacidal activities of cysteine-free peptides, but not of defensins. The hallmark of salivary gland-secreted histatin-5 (Hst 5) killing of C.albicans is the rapid efflux of cellular ATP and other small nucleotides and ions from the cell as well as concurrent intracellular uptake of propidium iodide (PI). TRK1 is the channel for Hst 5-induced killing and histatin-5 may directly or indirectly alter TRK1 function, allowing the efflux of larger anions, including ATP, and the influx of small cationic dyes, such as PI. In Candida albicans (strain SC5314 / ATCC MYA-2876) (Yeast), this protein is Potassium transporter TRK1.